A 353-amino-acid chain; its full sequence is DNA polymerase IV (353 aa).

The region spanning 4–185 (IIHVDMDCFF…LPLSKIPGVG (182 aa)) is the UmuC domain. Mg(2+)-binding residues include Asp8 and Asp103. Glu104 is a catalytic residue.

This sequence belongs to the DNA polymerase type-Y family. Monomer. Requires Mg(2+) as cofactor.

The protein resides in the cytoplasm. The catalysed reaction is DNA(n) + a 2'-deoxyribonucleoside 5'-triphosphate = DNA(n+1) + diphosphate. Functionally, poorly processive, error-prone DNA polymerase involved in untargeted mutagenesis. Copies undamaged DNA at stalled replication forks, which arise in vivo from mismatched or misaligned primer ends. These misaligned primers can be extended by PolIV. Exhibits no 3'-5' exonuclease (proofreading) activity. May be involved in translesional synthesis, in conjunction with the beta clamp from PolIII. This chain is DNA polymerase IV, found in Serratia proteamaculans (strain 568).